Consider the following 66-residue polypeptide: Cytochrome b-c1 complex subunit 9, mitochondrial (66 aa).

Over S2 to F17 the chain is Mitochondrial matrix. A helical membrane pass occupies residues V18–H43. The Mitochondrial intermembrane segment spans residues N44–E66.

Belongs to the UQCR10/QCR9 family. As to quaternary structure, component of the ubiquinol-cytochrome c oxidoreductase (cytochrome b-c1 complex, complex III, CIII), a multisubunit enzyme composed of 10 subunits. The complex is composed of 3 respiratory subunits cytochrome b (COB), cytochrome c1 (CYT1) and Rieske protein (RIP1), 2 core protein subunits COR1 and QCR2, and 5 low-molecular weight protein subunits QCR6, QCR7, QCR8, QCR9 and QCR10. The complex exists as an obligatory dimer and forms supercomplexes (SCs) in the inner mitochondrial membrane with a monomer or a dimer of cytochrome c oxidase (complex IV, CIV), resulting in 2 different assemblies (supercomplexes III(2)IV and III(2)IV(2)). Interacts with the transmembrane segment of RIP1.

Its subcellular location is the mitochondrion inner membrane. In terms of biological role, component of the ubiquinol-cytochrome c oxidoreductase, a multisubunit transmembrane complex that is part of the mitochondrial electron transport chain which drives oxidative phosphorylation. The respiratory chain contains 3 multisubunit complexes succinate dehydrogenase (complex II, CII), ubiquinol-cytochrome c oxidoreductase (cytochrome b-c1 complex, complex III, CIII) and cytochrome c oxidase (complex IV, CIV), that cooperate to transfer electrons derived from NADH and succinate to molecular oxygen, creating an electrochemical gradient over the inner membrane that drives transmembrane transport and the ATP synthase. The cytochrome b-c1 complex catalyzes electron transfer from ubiquinol to cytochrome c, linking this redox reaction to translocation of protons across the mitochondrial inner membrane, with protons being carried across the membrane as hydrogens on the quinol. In the process called Q cycle, 2 protons are consumed from the matrix, 4 protons are released into the intermembrane space and 2 electrons are passed to cytochrome c. The chain is Cytochrome b-c1 complex subunit 9, mitochondrial (QCR9) from Saccharomyces cerevisiae (strain ATCC 204508 / S288c) (Baker's yeast).